The primary structure comprises 342 residues: Serpentine receptor class delta-33 (342 aa).

7 consecutive transmembrane segments (helical) span residues 26–46 (IFVITVTILTSIGFLLNLLLL), 62–82 (IFLANTTITQLVYALFAVTSM), 112–132 (YVGILHLSLNSFISLMLSMIY), 148–168 (IILCIIGYFFPFLIFASCSNI), 205–225 (LIILTLAVTCGLVPIYFVMYW), 261–281 (IIPLVSVFPASIFWCLSQLGF), and 287–307 (YSYFIIPCLSLGCIADPVVTI).

The protein belongs to the nematode receptor-like protein srd family.

The protein resides in the membrane. The sequence is that of Serpentine receptor class delta-33 (srd-33) from Caenorhabditis elegans.